Here is a 119-residue protein sequence, read N- to C-terminus: Ribonuclease P protein component (119 aa).

It belongs to the RnpA family. Consists of a catalytic RNA component (M1 or rnpB) and a protein subunit.

The enzyme catalyses Endonucleolytic cleavage of RNA, removing 5'-extranucleotides from tRNA precursor.. Functionally, RNaseP catalyzes the removal of the 5'-leader sequence from pre-tRNA to produce the mature 5'-terminus. It can also cleave other RNA substrates such as 4.5S RNA. The protein component plays an auxiliary but essential role in vivo by binding to the 5'-leader sequence and broadening the substrate specificity of the ribozyme. The chain is Ribonuclease P protein component from Mycolicibacterium paratuberculosis (strain ATCC BAA-968 / K-10) (Mycobacterium paratuberculosis).